We begin with the raw amino-acid sequence, 149 residues long: D-aminoacyl-tRNA deacylase (149 aa).

A Gly-cisPro motif, important for rejection of L-amino acids motif is present at residues 137-138; that stretch reads GP.

It belongs to the DTD family. Homodimer.

It is found in the cytoplasm. It catalyses the reaction glycyl-tRNA(Ala) + H2O = tRNA(Ala) + glycine + H(+). The catalysed reaction is a D-aminoacyl-tRNA + H2O = a tRNA + a D-alpha-amino acid + H(+). Functionally, an aminoacyl-tRNA editing enzyme that deacylates mischarged D-aminoacyl-tRNAs. Also deacylates mischarged glycyl-tRNA(Ala), protecting cells against glycine mischarging by AlaRS. Acts via tRNA-based rather than protein-based catalysis; rejects L-amino acids rather than detecting D-amino acids in the active site. By recycling D-aminoacyl-tRNA to D-amino acids and free tRNA molecules, this enzyme counteracts the toxicity associated with the formation of D-aminoacyl-tRNA entities in vivo and helps enforce protein L-homochirality. The sequence is that of D-aminoacyl-tRNA deacylase from Thermoanaerobacter pseudethanolicus (strain ATCC 33223 / 39E) (Clostridium thermohydrosulfuricum).